Consider the following 22-residue polypeptide: uncharacterized protein (22 aa).

The chain crosses the membrane as a helical span at residues 3 to 22 (MFITGYDINQKQKKRYGLRG).

It belongs to the asfivirus C84L family.

The protein resides in the host membrane. This is an uncharacterized protein from Ornithodoros (relapsing fever ticks).